The primary structure comprises 120 residues: Large ribosomal subunit protein bL12 (120 aa).

This sequence belongs to the bacterial ribosomal protein bL12 family. Homodimer. Part of the ribosomal stalk of the 50S ribosomal subunit. Forms a multimeric L10(L12)X complex, where L10 forms an elongated spine to which 2 to 4 L12 dimers bind in a sequential fashion. Binds GTP-bound translation factors.

In terms of biological role, forms part of the ribosomal stalk which helps the ribosome interact with GTP-bound translation factors. Is thus essential for accurate translation. The polypeptide is Large ribosomal subunit protein bL12 (Lachnoclostridium phytofermentans (strain ATCC 700394 / DSM 18823 / ISDg) (Clostridium phytofermentans)).